A 405-amino-acid chain; its full sequence is MKVLVLNCGSSSVKYQVFDMKNESVLAKGLAERIGLEGSRIVYQRGSEAKKVFEIPLPTHKKAIEEIFKLLVDKNNGVLQSLNEIDAVGHRVVHGGDKFVESVLVNDEVYSIFKGILDLAPLHNPYNLQGVDACSELMPGVPQVLVFDTSFHQTMPEEAYIYALPYEWYEKYKIRRYGFHGTSHYYVSRRVAELIGRPVEELKIISCHLGNGASITAIKNGKSIDTSMGYTPLEGLVMGTRCGDIDPAIPILLMEKENLTPKQMDEILNKKSGILGISGVSSDFRDVGEAAEKGNKRAELALKVFAYRVKKYIGAYYAILGGLDVLVFTAGVGERGPLERSLICSGLEHLGIKLDPEKNKVKGEELRISAPDSKVEVWVIPTNEELMIARETVRVVGEKIIKKVI.

Asn-7 lines the Mg(2+) pocket. Lys-14 is an ATP binding site. Arg-91 lines the substrate pocket. Catalysis depends on Asp-148, which acts as the Proton donor/acceptor. ATP contacts are provided by residues 208–212 and 283–285; these read HLGNG and DFR. Glu-384 contacts Mg(2+).

Belongs to the acetokinase family. Homodimer. Requires Mg(2+) as cofactor. Mn(2+) is required as a cofactor.

It localises to the cytoplasm. It carries out the reaction acetate + ATP = acetyl phosphate + ADP. It functions in the pathway metabolic intermediate biosynthesis; acetyl-CoA biosynthesis; acetyl-CoA from acetate: step 1/2. Functionally, catalyzes the formation of acetyl phosphate from acetate and ATP. Can also catalyze the reverse reaction. The polypeptide is Acetate kinase (Dictyoglomus turgidum (strain DSM 6724 / Z-1310)).